A 646-amino-acid polypeptide reads, in one-letter code: Wee1-like protein kinase (646 aa).

The interval 1 to 181 (MSFLSRQQPP…GTPPHKTFRK (181 aa)) is disordered. Positions 32–43 (DCEEEEEEEEEE) are enriched in acidic residues. Serine 53 is subject to Phosphoserine; by PLK1. A phosphoserine mark is found at serine 78 and serine 85. The span at 94-103 (LLPGACPGAD) shows a compositional bias: low complexity. The residue at position 123 (serine 123) is a Phosphoserine; by CDK1. Serine 127, serine 137, serine 139, serine 150, and serine 165 each carry phosphoserine. Over residues 158–170 (RAGEGRRSPRPDH) the composition is skewed to basic and acidic residues. Phosphothreonine occurs at positions 187, 190, and 239. Phosphoserine occurs at positions 270, 307, and 312. The Protein kinase domain maps to 299–569 (FHELEKIGSG…AMALVKHSVL (271 aa)). ATP-binding positions include 305–313 (IGSGEFGSV) and lysine 328. Asparagine 342 lines the Mg(2+) pocket. The active-site Proton acceptor is aspartate 426. Mg(2+)-binding residues include asparagine 431, aspartate 463, and glycine 465. Serine 642 is modified (phosphoserine; by BRSK1 and BRSK2).

It belongs to the protein kinase superfamily. Ser/Thr protein kinase family. WEE1 subfamily. The cofactor is Mg(2+). In terms of processing, phosphorylated during M and G1 phases. Also autophosphorylated. Phosphorylation at Ser-642 by BRSK1 and BRSK2 in post-mitotic neurons, leads to down-regulate WEE1 activity in polarized neurons. Phosphorylated at Ser-53 and Ser-123 by PLK1 and CDK1, respectively, generating an signal for degradation that can be recognized by the SCF(BTRC) complex, leading to its ubiquitination and degradation at the onset of G2/M phase. Post-translationally, dephosphorylated at Thr-239 by CTDP1. Dephosphorylated at Ser-53 and Ser-123 by the serine/threonine-protein phosphatase 2A preventing its ubiquitin-mediated degradation. Ubiquitinated and degraded at the onset of G2/M phase.

The protein resides in the nucleus. It catalyses the reaction L-tyrosyl-[protein] + ATP = O-phospho-L-tyrosyl-[protein] + ADP + H(+). With respect to regulation, synthesis is increased during S and G2 phases, presumably by an increase in transcription; activity is decreased by phosphorylation during M phase. Protein levels fall in M phase as a result of decreased synthesis combined with degradation. Activity seems to be negatively regulated by phosphorylation upon entry into mitosis, although N-terminal phosphorylation might also regulate the protein stability via protection from proteolysis or might regulate the subcellular location. Its function is as follows. Acts as a negative regulator of entry into mitosis (G2 to M transition) by protecting the nucleus from cytoplasmically activated cyclin B1-complexed CDK1 before the onset of mitosis by mediating phosphorylation of CDK1 on 'Tyr-15'. Specifically phosphorylates and inactivates cyclin B1-complexed CDK1 reaching a maximum during G2 phase and a minimum as cells enter M phase. Phosphorylation of cyclin B1-CDK1 occurs exclusively on 'Tyr-15' and phosphorylation of monomeric CDK1 does not occur. Its activity increases during S and G2 phases and decreases at M phase when it is hyperphosphorylated. A correlated decrease in protein level occurs at M/G1 phase, probably due to its degradation. This chain is Wee1-like protein kinase, found in Homo sapiens (Human).